Here is a 377-residue protein sequence, read N- to C-terminus: MAAPCLRTPGVQLLSMSSRPGRLFTPGSWSFCSSATSSRPLNAQRLAEKLRAQKQEQKAKEVRVPTNPVQRRVQELVRFTQQLQRVHPNVLAKELSRRILHQDNDLVVINKPYGLPVHGGPGVQLCISDVLPILAKMLHGHKAEPLHLCHRLDKETTGVMVLAWEKDMAHQVQELFRTRQVEKKYWAITVRVPLPSAGVVDIPIKEKEVQGPQQHHKMTLSPSYRLDNGKMVKVRASRDAHVAVTQYQVLSSASSSALVELQPVTGIKHQLRVHLSFGLDCPILGDHKYSDWTRLAPQKLSAGTLKKLGLQQSKARYIPLHLHARQLILPALGSRTEELLLTCKLPHFFARSLLRLGLDMPNQDQSRGNKARHVEAR.

The transit peptide at 1-46 (MAAPCLRTPGVQLLSMSSRPGRLFTPGSWSFCSSATSSRPLNAQRL) directs the protein to the mitochondrion. The active site involves aspartate 153.

The protein belongs to the pseudouridine synthase RluA family. In terms of assembly, interacts with 16S mt-rRNA, mt-tRNA(Phe) and mt-tRNA(Met). Forms a regulatory protein-RNA complex, consisting of RCC1L, NGRN, RPUSD3, RPUSD4, TRUB2, FASTKD2 and 16S mt-rRNA.

It localises to the mitochondrion matrix. It is found in the nucleus. The protein localises to the cytoplasm. It catalyses the reaction uridine in 5S rRNA = pseudouridine in 5S rRNA. It carries out the reaction a uridine in tRNA = a pseudouridine in tRNA. The catalysed reaction is a uridine in mRNA = a pseudouridine in mRNA. Its function is as follows. Catalyzes uridine to pseudouridine isomerization (pseudouridylation) of different mitochondrial RNA substrates. Acts on position 1397 in 16S mitochondrial ribosomal RNA (16S mt-rRNA). This modification is required for the assembly of 16S mt-rRNA into a functional mitochondrial ribosome. As a component of a functional protein-RNA module, consisting of RCC1L, NGRN, RPUSD3, RPUSD4, TRUB2, FASTKD2 and 16S mt-rRNA, controls 16S mt-rRNA abundance and is required for intra-mitochondrial translation. Acts on position 39 in mitochondrial tRNA(Phe). Also catalyzes pseudouridylation of mRNAs in nucleus: acts as a regulator of pre-mRNA splicing by mediating pseudouridylation of pre-mRNAs at locations associated with alternatively spliced regions. Pseudouridylation of pre-mRNAs near splice sites directly regulates mRNA splicing and mRNA 3'-end processing. The protein is Pseudouridylate synthase RPUSD4, mitochondrial of Mus musculus (Mouse).